A 571-amino-acid polypeptide reads, in one-letter code: Glutamate--tRNA ligase (571 aa).

A 'HIGH' region motif is present at residues Pro38–Gly48. Positions Lys316–Arg320 match the 'KMSKS' region motif. Lys319 serves as a coordination point for ATP.

This sequence belongs to the class-I aminoacyl-tRNA synthetase family. Glutamate--tRNA ligase type 1 subfamily. As to quaternary structure, monomer.

Its subcellular location is the cytoplasm. The catalysed reaction is tRNA(Glu) + L-glutamate + ATP = L-glutamyl-tRNA(Glu) + AMP + diphosphate. In terms of biological role, catalyzes the attachment of glutamate to tRNA(Glu) in a two-step reaction: glutamate is first activated by ATP to form Glu-AMP and then transferred to the acceptor end of tRNA(Glu). This is Glutamate--tRNA ligase from Sorangium cellulosum (strain So ce56) (Polyangium cellulosum (strain So ce56)).